Reading from the N-terminus, the 682-residue chain is MLPLNSVRTHAGRLVPVMLAALFLAGCPSQAPQSPAMQQRVEGKAGASSDYYLQQMQQSSDDSKADWQLLAIHALIQEGKLPQAGNQLGTLPSQLGDKQRQEQRLLTAELAVAQNDMNAANTMLAQLDVKSLSPQQQERYYQAQIKAAQDRTSLTLIRAYIGLEPLLQGDAHQRNIDQTWTALTRLNQQDLSSMVINVDENTLQGWLDLLNLWQTKAQVPSDLQAAIEDWKKRYPRHPAAKQLPSQLGGTPPAAAAPTTGETAPTGGNAIALLLPLNGQAQAFANAIQQGFSAARSGQASLAMPAQPAQLAQAANNAAAATPGAPAVPSPASSTPSAVSPTPAAATTVMPALTAATAGTIPVKVYDTSNQALANVIAQAQKDGATTIVGPLLKNEVEQLPGLNPSLNVLALNQPEHIQPNPNICYFALSPEDEAADAAQFIHKQGKQHPLILAPRGNLGDRVVAAFAKSWQQQSGGVVLQQRTGSMYDLKQAINSGAGIPLNGQPVITAASAPQPSTTVGGLTIPNQAPPIAAVTSDGNVDAIYIIATPDELALLKPMIDMRNKGASRPALYASSRSYQAGLGPDFRFEMEGLQFSDIPLLTGASPALMQQVSTQFRNDYSLVRLFAMGMDAWKLASDFSQLHQPGSSLSGATGILSASSDCVVNRKLTWLQFRQGQLVPAS.

A signal peptide spans 1–26; the sequence is MLPLNSVRTHAGRLVPVMLAALFLAG. A lipid anchor (N-palmitoyl cysteine) is attached at cysteine 27. Cysteine 27 is lipidated: S-diacylglycerol cysteine. Disordered stretches follow at residues 240 to 262 and 314 to 341; these read AKQL…TGET and ANNA…VSPT. Residues 248–262 are compositionally biased toward low complexity; that stretch reads GGTPPAAAAPTTGET.

This sequence belongs to the LpoA family. In terms of assembly, interacts with PBP1a.

It is found in the cell outer membrane. Its function is as follows. Regulator of peptidoglycan synthesis that is essential for the function of penicillin-binding protein 1A (PBP1a). The polypeptide is Penicillin-binding protein activator LpoA (Dickeya chrysanthemi (strain Ech1591) (Dickeya zeae (strain Ech1591))).